The chain runs to 904 residues: DNA replication licensing factor MCM2 (904 aa).

Positions 1–15 (MAESSESFTMASSPA) are enriched in polar residues. Residues 1–80 (MAESSESFTM…ELIGDGMERD (80 aa)) are disordered. The residue at position 2 (Ala-2) is an N-acetylalanine. Residues 2–257 (AESSESFTMA…LPEAPAELLQ (256 aa)) form an interaction with KAT7 region. A phosphoserine mark is found at Ser-12 and Ser-13. Thr-25 is subject to Phosphothreonine. A phosphoserine mark is found at Ser-26, Ser-27, and Ser-32. Residue Thr-39 is modified to Phosphothreonine. Residue Ser-40 is modified to Phosphoserine; by CDC7. Phosphoserine is present on Ser-41. Ser-53 is modified (phosphoserine; by CDC7). Thr-59 carries the phosphothreonine modification. The interval 61-130 (GPLEEEEDGE…DREAGRGLGR (70 aa)) is interaction with DNJC9. Residues 62-73 (PLEEEEDGEELI) are compositionally biased toward acidic residues. Ser-108 carries the post-translational modification Phosphoserine; by ATR. The tract at residues 109 to 167 (QREAAERAMRQRDREAGRGLGRMRRGLLYDSDEEDEERPARKRRQVERATEDGEEDEEM) is disordered. A compositionally biased stretch (basic and acidic residues) spans 111-125 (EAAERAMRQRDREAG). Phosphotyrosine is present on Tyr-137. The residue at position 139 (Ser-139) is a Phosphoserine. Residue Lys-178 forms a Glycyl lysine isopeptide (Lys-Gly) (interchain with G-Cter in SUMO2) linkage. Lys-216 is subject to N6-acetyllysine. Residues 329-355 (CNKCNFVLGPFCQSQNQEVKPGSCPEC) form a C4-type zinc finger. Residues Ser-381 and Ser-484 each carry the phosphoserine modification. One can recognise an MCM domain in the interval 473–679 (IGEKIFASIA…VQDEMLARFV (207 aa)). Ser-530 and Gln-531 together coordinate ADP. Positions 655-658 (SRFD) match the Arginine finger motif. Positions 686–705 (HHPSNKEEEGLANGSAAEPA) are disordered.

This sequence belongs to the MCM family. As to quaternary structure, component of the MCM2-7 complex. The complex forms a toroidal hexameric ring with the proposed subunit order MCM2-MCM6-MCM4-MCM7-MCM3-MCM5. Component of the CMG helicase complex, a hexameric ring of related MCM2-7 subunits stabilized by CDC45 and the tetrameric GINS complex. Interacts with DBF4. Interacts with KAT7. May interact with MCM10. Component of the replisome complex composed of at least DONSON, MCM2, MCM7, PCNA and TICRR. Forms a co-chaperone complex with DNAJC9 and histone H3.3-H4 heterodimers. Within the complex, interacts (via N-terminus) with DNAJC9 (via C-terminus); the interaction is histone-dependent. Interacts with histones H3.1 and H3.3. Interacts with AGER/RAGE; the interaction is increased following DNA replication stress and stabilizes the MCM2-7 complex at replication forks. In terms of processing, phosphorylated on Ser-108 by ATR in proliferating cells. Ser-108 proliferation is increased by genotoxic agents. Ser-40 is mediated by the CDC7-DBF4 and CDC7-DBF4B complexes, while Ser-53 phosphorylation is only mediated by the CDC7-DBF4 complex. Phosphorylation by the CDC7-DBF4 complex during G1/S phase is required for the initiation of DNA replication.

It localises to the nucleus. It is found in the chromosome. The catalysed reaction is ATP + H2O = ADP + phosphate + H(+). Acts as a component of the MCM2-7 complex (MCM complex) which is the replicative helicase essential for 'once per cell cycle' DNA replication initiation and elongation in eukaryotic cells. Core component of CDC45-MCM-GINS (CMG) helicase, the molecular machine that unwinds template DNA during replication, and around which the replisome is built. The active ATPase sites in the MCM2-7 ring are formed through the interaction surfaces of two neighboring subunits such that a critical structure of a conserved arginine finger motif is provided in trans relative to the ATP-binding site of the Walker A box of the adjacent subunit. The six ATPase active sites, however, are likely to contribute differentially to the complex helicase activity. Required for the entry in S phase and for cell division. Plays a role in terminally differentiated hair cells development of the cochlea and induces cells apoptosis. This is DNA replication licensing factor MCM2 from Homo sapiens (Human).